A 311-amino-acid chain; its full sequence is Mycothiol acetyltransferase (311 aa).

Residue E35 coordinates 1D-myo-inositol 2-(L-cysteinylamino)-2-deoxy-alpha-D-glucopyranoside. 79-81 contacts acetyl-CoA; that stretch reads LVV. The N-acetyltransferase domain maps to 155 to 311; that stretch reads VRTYVGTVDD…TAYALARIDD (157 aa). Residues E180, K225, and E235 each coordinate 1D-myo-inositol 2-(L-cysteinylamino)-2-deoxy-alpha-D-glucopyranoside. Residues 239–241 and 246–252 contribute to the acetyl-CoA site; these read LGV and QGRGLGQ. Y278 is a 1D-myo-inositol 2-(L-cysteinylamino)-2-deoxy-alpha-D-glucopyranoside binding site. Position 283–288 (283–288) interacts with acetyl-CoA; sequence NVAAAR.

Belongs to the acetyltransferase family. MshD subfamily. Monomer.

It catalyses the reaction 1D-myo-inositol 2-(L-cysteinylamino)-2-deoxy-alpha-D-glucopyranoside + acetyl-CoA = mycothiol + CoA + H(+). In terms of biological role, catalyzes the transfer of acetyl from acetyl-CoA to desacetylmycothiol (Cys-GlcN-Ins) to form mycothiol. The protein is Mycothiol acetyltransferase of Mycobacterium leprae (strain Br4923).